A 179-amino-acid chain; its full sequence is Sodium/potassium-transporting ATPase subunit beta-1-interacting protein 3 (179 aa).

4 consecutive transmembrane segments (helical) span residues 5–22 (TGRCTLVFICTLQMLVAL), 35–55 (APILGNFLHIIVVILGLFGTI), 62–82 (IVAYTIWTAFWVAWNVFIICF), and 151–171 (AVQILLSLIGFVYACYVISVI).

It belongs to the NKAIN family. In terms of assembly, interacts with atp1b1 C-terminus.

The protein localises to the cell membrane. This chain is Sodium/potassium-transporting ATPase subunit beta-1-interacting protein 3 (nkain3), found in Xenopus laevis (African clawed frog).